The primary structure comprises 580 residues: PTS system fructose-specific EIIB'BC component (580 aa).

2 PTS EIIB type-2 domains span residues 1-99 and 120-215; these read MSSS…QLAA and IVAI…KALA. Cys-126 acts as the Phosphocysteine intermediate; for EIIB activity in catalysis. A Phosphocysteine; by EIIA modification is found at Cys-126. The 338-residue stretch at 243–580 folds into the PTS EIIC type-2 domain; that stretch reads AYKHLMTGVS…LKKPVADVIA (338 aa). The next 9 helical transmembrane spans lie at 254 to 274, 289 to 309, 332 to 352, 369 to 389, 410 to 430, 451 to 471, 483 to 503, 509 to 529, and 549 to 571; these read MLPFVTAGGLLIALAFALGGI, LFQIGAKAGFTLMVPALAGYI, LNAGFLGGIIAGFIAGYGVAA, VLILPVLGTLLVGLAMMYVFG, SALLLGLLLGGMMAFDMGGPV, AAAMVAGMTPPLGIALATWVF, ATAAGVLGLAFVTEGAIPYAA, TIPALVIGSAVAGAISMTAGA, and HLLNYVLALVVGVVVTAVALRLL.

It localises to the cell inner membrane. It catalyses the reaction D-fructose(out) + N(pros)-phospho-L-histidyl-[protein] = D-fructose 1-phosphate(in) + L-histidyl-[protein]. Its function is as follows. The phosphoenolpyruvate-dependent sugar phosphotransferase system (sugar PTS), a major carbohydrate active transport system, catalyzes the phosphorylation of incoming sugar substrates concomitantly with their translocation across the cell membrane. The enzyme II FruAB PTS system is involved in fructose transport. This Xanthomonas campestris pv. campestris (strain ATCC 33913 / DSM 3586 / NCPPB 528 / LMG 568 / P 25) protein is PTS system fructose-specific EIIB'BC component.